Here is a 329-residue protein sequence, read N- to C-terminus: GTP 3',8-cyclase (329 aa).

A Radical SAM core domain is found at 8 to 234; the sequence is AFARKFYYLR…QLRQRSDGPA (227 aa). A GTP-binding site is contributed by Arg17. The [4Fe-4S] cluster site is built by Cys24 and Cys28. Tyr30 serves as a coordination point for S-adenosyl-L-methionine. Cys31 contributes to the [4Fe-4S] cluster binding site. Arg68 contacts GTP. Gly72 is an S-adenosyl-L-methionine binding site. Residue Thr99 coordinates GTP. Ser123 lines the S-adenosyl-L-methionine pocket. Lys160 is a binding site for GTP. Met194 serves as a coordination point for S-adenosyl-L-methionine. Residues Cys257 and Cys260 each coordinate [4Fe-4S] cluster. 262 to 264 serves as a coordination point for GTP; sequence RLR. Position 274 (Cys274) interacts with [4Fe-4S] cluster.

This sequence belongs to the radical SAM superfamily. MoaA family. In terms of assembly, monomer and homodimer. It depends on [4Fe-4S] cluster as a cofactor.

It catalyses the reaction GTP + AH2 + S-adenosyl-L-methionine = (8S)-3',8-cyclo-7,8-dihydroguanosine 5'-triphosphate + 5'-deoxyadenosine + L-methionine + A + H(+). It participates in cofactor biosynthesis; molybdopterin biosynthesis. Functionally, catalyzes the cyclization of GTP to (8S)-3',8-cyclo-7,8-dihydroguanosine 5'-triphosphate. The sequence is that of GTP 3',8-cyclase from Escherichia coli (strain K12 / MC4100 / BW2952).